Here is a 339-residue protein sequence, read N- to C-terminus: Dihydroorotase (339 aa).

His-12 and His-14 together coordinate Zn(2+). Substrate contacts are provided by residues 14-16 (HVR) and Asn-40. The Zn(2+) site is built by Lys-94, His-133, His-167, and Asp-239. Lys-94 is modified (N6-carboxylysine). His-133 contributes to the substrate binding site. Residue Asp-239 is part of the active site. 2 residues coordinate substrate: His-243 and Ala-255.

This sequence belongs to the metallo-dependent hydrolases superfamily. DHOase family. Class II DHOase subfamily. As to quaternary structure, homodimer. The cofactor is Zn(2+).

It catalyses the reaction (S)-dihydroorotate + H2O = N-carbamoyl-L-aspartate + H(+). It functions in the pathway pyrimidine metabolism; UMP biosynthesis via de novo pathway; (S)-dihydroorotate from bicarbonate: step 3/3. Catalyzes the reversible cyclization of carbamoyl aspartate to dihydroorotate. The chain is Dihydroorotase from Helicobacter pylori (strain HPAG1).